The sequence spans 820 residues: DNA mismatch repair protein MutS (820 aa).

ATP is bound at residue 618–625; it reads GPNMAGKS.

The protein belongs to the DNA mismatch repair MutS family.

This protein is involved in the repair of mismatches in DNA. It is possible that it carries out the mismatch recognition step. This protein has a weak ATPase activity. The chain is DNA mismatch repair protein MutS from Chlamydia trachomatis serovar A (strain ATCC VR-571B / DSM 19440 / HAR-13).